The following is a 429-amino-acid chain: Mannose-6-phosphate isomerase (429 aa).

Ser2 is subject to N-acetylserine. Ser107 is modified (phosphoserine). Zn(2+)-binding residues include Gln109, His111, Glu136, and His281. Arg300 is an active-site residue.

Belongs to the mannose-6-phosphate isomerase type 1 family. In terms of assembly, monomer. The cofactor is Zn(2+).

The protein localises to the cytoplasm. It catalyses the reaction D-mannose 6-phosphate = D-fructose 6-phosphate. The protein operates within nucleotide-sugar biosynthesis; GDP-alpha-D-mannose biosynthesis; alpha-D-mannose 1-phosphate from D-fructose 6-phosphate: step 1/2. With respect to regulation, can be inhibited by an excess of zinc. Functionally, involved in the synthesis of the GDP-mannose and dolichol-phosphate-mannose required for a number of critical mannosyl transfer reactions. The chain is Mannose-6-phosphate isomerase (PMI40) from Saccharomyces cerevisiae (strain ATCC 204508 / S288c) (Baker's yeast).